The sequence spans 144 residues: NADH dehydrogenase [ubiquinone] 1 alpha subcomplex subunit 13 (144 aa).

Ala2 carries the N-acetylalanine modification. Residues 30-51 (LSGYSMLAIGIGTLIYGHWSIM) form a helical membrane-spanning segment. The tract at residues 102–144 (PDWKVGESVFHTTRWVPPLIGELYGLRTTEEALHASHGFMWYT) is important for inducing cell death.

Belongs to the complex I NDUFA13 subunit family. As to quaternary structure, complex I is composed of 45 different subunits. Interacts with CARD15, but not with CARD4. Interacts with STAT3, but not with STAT1, STAT2 and STAT5A. Interacts with OLFM4. (Microbial infection) Interacts with HHV-8 IRF1, in the nucleus, with HPV-16 E6 and SV40 LT. Widely expressed, with highest expression in heart, skeletal muscle, liver, kidney and placenta. In intestinal mucosa, down-regulated in areas involved in Crohn disease and ulcerative colitis.

The protein localises to the mitochondrion inner membrane. Its subcellular location is the nucleus. Its function is as follows. Accessory subunit of the mitochondrial membrane respiratory chain NADH dehydrogenase (Complex I), that is believed not to be involved in catalysis. Complex I functions in the transfer of electrons from NADH to the respiratory chain. The immediate electron acceptor for the enzyme is believed to be ubiquinone. Involved in the interferon/all-trans-retinoic acid (IFN/RA) induced cell death. This apoptotic activity is inhibited by interaction with viral IRF1. Prevents the transactivation of STAT3 target genes. May play a role in CARD15-mediated innate mucosal responses and serve to regulate intestinal epithelial cell responses to microbes. In Homo sapiens (Human), this protein is NADH dehydrogenase [ubiquinone] 1 alpha subcomplex subunit 13 (NDUFA13).